Reading from the N-terminus, the 201-residue chain is Probable molybdenum cofactor guanylyltransferase (201 aa).

GTP-binding positions include 6 to 8, K18, D65, and D97; that span reads LAG. Residue D97 coordinates Mg(2+).

This sequence belongs to the MobA family. Mg(2+) serves as cofactor.

Its subcellular location is the cytoplasm. The enzyme catalyses Mo-molybdopterin + GTP + H(+) = Mo-molybdopterin guanine dinucleotide + diphosphate. Transfers a GMP moiety from GTP to Mo-molybdopterin (Mo-MPT) cofactor (Moco or molybdenum cofactor) to form Mo-molybdopterin guanine dinucleotide (Mo-MGD) cofactor. This chain is Probable molybdenum cofactor guanylyltransferase, found in Staphylococcus haemolyticus (strain JCSC1435).